The primary structure comprises 275 residues: 4-hydroxy-tetrahydrodipicolinate reductase (275 aa).

Residues 8 to 13 (GATGRM), 100 to 102 (GTT), and 126 to 129 (SPNM) each bind NAD(+). Histidine 160 serves as the catalytic Proton donor/acceptor. Histidine 161 lines the (S)-2,3,4,5-tetrahydrodipicolinate pocket. The active-site Proton donor is lysine 164. Position 170–171 (170–171 (GT)) interacts with (S)-2,3,4,5-tetrahydrodipicolinate.

Belongs to the DapB family.

The protein resides in the cytoplasm. The enzyme catalyses (S)-2,3,4,5-tetrahydrodipicolinate + NAD(+) + H2O = (2S,4S)-4-hydroxy-2,3,4,5-tetrahydrodipicolinate + NADH + H(+). It carries out the reaction (S)-2,3,4,5-tetrahydrodipicolinate + NADP(+) + H2O = (2S,4S)-4-hydroxy-2,3,4,5-tetrahydrodipicolinate + NADPH + H(+). The protein operates within amino-acid biosynthesis; L-lysine biosynthesis via DAP pathway; (S)-tetrahydrodipicolinate from L-aspartate: step 4/4. In terms of biological role, catalyzes the conversion of 4-hydroxy-tetrahydrodipicolinate (HTPA) to tetrahydrodipicolinate. In Methanopyrus kandleri (strain AV19 / DSM 6324 / JCM 9639 / NBRC 100938), this protein is 4-hydroxy-tetrahydrodipicolinate reductase.